A 620-amino-acid polypeptide reads, in one-letter code: mRNA cap guanine-N(7) methyltransferase (620 aa).

Disordered regions lie at residues M1–S176 and A193–Y304. The segment covering R29–L44 has biased composition (polar residues). Low complexity-rich tracts occupy residues P45–P60 and P136–H157. The mRNA cap 0 methyltransferase domain occupies S345–M620. N354–N355 is a binding site for mRNA. S-adenosyl-L-methionine-binding residues include K358, G377, D399, D428, Q454, and Y459.

Belongs to the class I-like SAM-binding methyltransferase superfamily. mRNA cap 0 methyltransferase family.

The protein localises to the nucleus. The catalysed reaction is a 5'-end (5'-triphosphoguanosine)-ribonucleoside in mRNA + S-adenosyl-L-methionine = a 5'-end (N(7)-methyl 5'-triphosphoguanosine)-ribonucleoside in mRNA + S-adenosyl-L-homocysteine. Its function is as follows. Responsible for methylating the 5'-cap structure of mRNAs. This chain is mRNA cap guanine-N(7) methyltransferase (ABD1), found in Cryptococcus neoformans var. neoformans serotype D (strain JEC21 / ATCC MYA-565) (Filobasidiella neoformans).